Here is a 317-residue protein sequence, read N- to C-terminus: Serpentine receptor class delta-46 (317 aa).

7 helical membrane-spanning segments follow: residues phenylalanine 9–isoleucine 29, isoleucine 42–alanine 62, tyrosine 91–valine 111, valine 129–isoleucine 149, glutamine 185–leucine 205, alanine 239–threonine 259, and phenylalanine 269–valine 289.

It belongs to the nematode receptor-like protein srd family.

The protein resides in the membrane. The chain is Serpentine receptor class delta-46 (srd-46) from Caenorhabditis elegans.